Consider the following 545-residue polypeptide: MSNNGVDIQDKPPAPPMRNTSTMIGAGSKDTGTLNHGSKPLPPNPEEKKKKDRFYRSILPGDKTNKKREKERPEISLPSDFEHTIHVGFDAVTGEFTGMPEQWARLLQTSNITKSEQKKNPQAVLDVLEFYNSKKTSNSKKYMSFTDKSAEDYNSSNTLNVKTVSETPAVPPVSEDDEDDDDDATPPPVIAPRPEHTKSVYTRSVIEPLPVTPTRDVATSPISPTENNTTPPDALTRNTEKQKKKPKMSDEEILEKLRSIVSVGDPKKKYTPFEKIGQGASGTVYTAMDVATGQEVAIKQMNLQQQPKKELIINEILVMRENKNPNIVNYLDSYLVGDELWVVMEYLAGGSLTDVVTETCMDEGQIAAVCRECLQALEFLHSNQVIHRDIKSDNILLGMDGSVKLTDFGFCAQITPEQSKRSTMVGTPYWMAPEVVTRKAYGPKVDIWSLGIMAIEMIEGEPPYLNENPLRALYLIATNGTPELQNPEKLSAIFRDFLQCCLEMDVEKRGSAKELLQHQFLKIAKPLSSLTPLMHAAKEATKNNH.

Residues 1 to 75 form a disordered region; that stretch reads MSNNGVDIQD…KKREKERPEI (75 aa). Ser2 is modified (N-acetylserine). A Phosphoserine; by PKB and autocatalysis modification is found at Ser21. The residue at position 57 (Ser57) is a Phosphoserine; by autocatalysis. The interval 70–140 is autoregulatory region; sequence KERPEISLPS…YNSKKTSNSK (71 aa). The 14-residue stretch at 75 to 88 folds into the CRIB domain; that stretch reads ISLPSDFEHTIHVG. The interval 75-105 is GTPase-binding; it reads ISLPSDFEHTIHVGFDAVTGEFTGMPEQWAR. Phosphothreonine; by OXSR1 is present on Thr84. At Ser115 the chain carries Phosphoserine. A phosphotyrosine mark is found at Tyr131 and Tyr142. Phosphoserine; by autocatalysis occurs at positions 144 and 149. The interval 150-198 is disordered; that stretch reads AEDYNSSNTLNVKTVSETPAVPPVSEDDEDDDDDATPPPVIAPRPEHTK. A compositionally biased stretch (polar residues) spans 152–166; it reads DYNSSNTLNVKTVSE. Tyr153 bears the Phosphotyrosine; by JAK2 mark. At Ser174 the chain carries Phosphoserine. A compositionally biased stretch (acidic residues) spans 174–184; that stretch reads SEDDEDDDDDA. Thr185 is modified (phosphothreonine). Ser199 carries the post-translational modification Phosphoserine; by autocatalysis. Tyr201 bears the Phosphotyrosine; by JAK2 mark. Phosphoserine; by autocatalysis is present on Ser204. Residues 210–250 form a disordered region; it reads PVTPTRDVATSPISPTENNTTPPDALTRNTEKQKKKPKMSD. Residues Thr212 and Thr219 each carry the phosphothreonine modification. Phosphoserine is present on residues Ser220 and Ser223. Positions 220-231 are enriched in polar residues; that stretch reads SPISPTENNTTP. A phosphothreonine mark is found at Thr225, Thr229, and Thr230. In terms of domain architecture, Protein kinase spans 270 to 521; sequence YTPFEKIGQG…AKELLQHQFL (252 aa). 276–284 lines the ATP pocket; that stretch reads IGQGASGTV. Tyr285 carries the phosphotyrosine; by JAK2 modification. Lys299 lines the ATP pocket. Asp389 functions as the Proton acceptor in the catalytic mechanism. Thr423 carries the phosphothreonine; by autocatalysis, BRSK2 and PDPK1 modification.

It belongs to the protein kinase superfamily. STE Ser/Thr protein kinase family. STE20 subfamily. As to quaternary structure, homodimer in its autoinhibited state. Active as monomer. Interacts with GIT1. Component of cytoplasmic complexes, which also contains PXN, ARHGEF7 and GIT1. Interacts with NISCH. Interacts with DVL1; mediates the formation of a DVL1, MUSK and PAK1 ternary complex involved in AChR clustering. Binds to the caspase-cleaved p110 isoform of CDC2L1 and CDC2L2, p110C, but not the full-length proteins. Interacts with ARHGEF7. Interacts tightly with GTP-bound but not GDP-bound CDC42/P21 and RAC1. Interacts with SCRIB. Interacts with PDPK1. Interacts (via kinase domain) with RAF1. Interacts with NCK1 and NCK2. Interacts with TBCB. Interacts with BRSK2. Interacts with SNAI1. Interacts with CIB1 (via N-terminal region); the interaction is direct, promotes PAK1 activity and occurs in a calcium-dependent manner. Interacts with INPP5K. Interacts with gamma-tubulin. Interacts with RHOU; the interaction promotes PAK1 activation. Mg(2+) serves as cofactor. Autophosphorylated in trans, meaning that in a dimer, one kinase molecule phosphorylates the other one. Activated by autophosphorylation at Thr-423 in response to a conformation change, triggered by interaction with GTP-bound CDC42 or RAC1. Activated by phosphorylation at Thr-423 by BRSK2 and by PDPK1. Phosphorylated by JAK2 in response to PRL; this increases PAK1 kinase activity. Phosphorylated at Ser-21 by PKB/AKT; this reduces interaction with NCK1 and association with focal adhesion sites. Upon DNA damage, phosphorylated at Thr-212 and translocates to the nucleoplasm. Phosphorylated at tyrosine residues, which can be enhanced by NTN1.

Its subcellular location is the cytoplasm. The protein localises to the cell junction. The protein resides in the focal adhesion. It is found in the cell projection. It localises to the lamellipodium. Its subcellular location is the cell membrane. The protein localises to the ruffle membrane. The protein resides in the invadopodium. It is found in the nucleus. It localises to the nucleoplasm. Its subcellular location is the chromosome. The protein localises to the cytoskeleton. The protein resides in the microtubule organizing center. It is found in the centrosome. It carries out the reaction L-seryl-[protein] + ATP = O-phospho-L-seryl-[protein] + ADP + H(+). The enzyme catalyses L-threonyl-[protein] + ATP = O-phospho-L-threonyl-[protein] + ADP + H(+). Its activity is regulated as follows. Phosphorylation of Thr-84 by OXSR1 inhibits activation. Activated by binding small G proteins. Binding of GTP-bound CDC42 or RAC1 to the autoregulatory region releases monomers from the autoinhibited dimer, and enables activation by phosphorylation of Thr-423. Its function is as follows. Protein kinase involved in intracellular signaling pathways downstream of integrins and receptor-type kinases that plays an important role in cytoskeleton dynamics, in cell adhesion, migration, proliferation, apoptosis, mitosis, and in vesicle-mediated transport processes. Can directly phosphorylate BAD and protects cells against apoptosis. Activated by interaction with CDC42 and RAC1. Functions as a GTPase effector that links the Rho-related GTPases CDC42 and RAC1 to the JNK MAP kinase pathway. Phosphorylates and activates MAP2K1, and thereby mediates activation of downstream MAP kinases. Involved in the reorganization of the actin cytoskeleton, actin stress fibers and of focal adhesion complexes. Phosphorylates the tubulin chaperone TBCB and thereby plays a role in the regulation of microtubule biogenesis and organization of the tubulin cytoskeleton. Plays a role in the regulation of insulin secretion in response to elevated glucose levels. Part of a ternary complex that contains PAK1, DVL1 and MUSK that is important for MUSK-dependent regulation of AChR clustering during the formation of the neuromuscular junction (NMJ). Activity is inhibited in cells undergoing apoptosis, potentially due to binding of CDC2L1 and CDC2L2. Phosphorylates MYL9/MLC2. Phosphorylates RAF1 at 'Ser-338' and 'Ser-339' resulting in: activation of RAF1, stimulation of RAF1 translocation to mitochondria, phosphorylation of BAD by RAF1, and RAF1 binding to BCL2. Phosphorylates SNAI1 at 'Ser-246' promoting its transcriptional repressor activity by increasing its accumulation in the nucleus. In podocytes, promotes NR3C2 nuclear localization. Required for atypical chemokine receptor ACKR2-induced phosphorylation of LIMK1 and cofilin (CFL1) and for the up-regulation of ACKR2 from endosomal compartment to cell membrane, increasing its efficiency in chemokine uptake and degradation. In synapses, seems to mediate the regulation of F-actin cluster formation performed by SHANK3, maybe through CFL1 phosphorylation and inactivation. Plays a role in RUFY3-mediated facilitating gastric cancer cells migration and invasion. In response to DNA damage, phosphorylates MORC2 which activates its ATPase activity and facilitates chromatin remodeling. In neurons, plays a crucial role in regulating GABA(A) receptor synaptic stability and hence GABAergic inhibitory synaptic transmission through its role in F-actin stabilization. In hippocampal neurons, necessary for the formation of dendritic spines and excitatory synapses; this function is dependent on kinase activity and may be exerted by the regulation of actomyosin contractility through the phosphorylation of myosin II regulatory light chain (MLC). Along with GIT1, positively regulates microtubule nucleation during interphase. Phosphorylates FXR1, promoting its localization to stress granules and activity. Phosphorylates ILK on 'Thr-173' and 'Ser-246', promoting nuclear export of ILK. In Mus musculus (Mouse), this protein is Serine/threonine-protein kinase PAK 1.